Consider the following 695-residue polypeptide: WD repeat-containing protein 93 (695 aa).

Residues 1 to 35 (MSSFKGNQAQKRRLSVFPKGPLEIPSPTEADWPKD) form a disordered region. A WD repeat occupies 421–460 (PCAAPIVMSQISSFSSYLALVCEDGVLILWDLAEGFLFGV).

In terms of tissue distribution, testis-specific. Expressed in spermatogonia, spermatocytes and spermatids.

The polypeptide is WD repeat-containing protein 93 (Wdr93) (Mus musculus (Mouse)).